Consider the following 212-residue polypeptide: Large ribosomal subunit protein bL25 (212 aa).

This sequence belongs to the bacterial ribosomal protein bL25 family. CTC subfamily. Part of the 50S ribosomal subunit; part of the 5S rRNA/L5/L18/L25 subcomplex. Contacts the 5S rRNA. Binds to the 5S rRNA independently of L5 and L18.

In terms of biological role, this is one of the proteins that binds to the 5S RNA in the ribosome where it forms part of the central protuberance. In Leptospira interrogans serogroup Icterohaemorrhagiae serovar copenhageni (strain Fiocruz L1-130), this protein is Large ribosomal subunit protein bL25.